The sequence spans 294 residues: ATP synthase gamma chain (294 aa).

This sequence belongs to the ATPase gamma chain family. F-type ATPases have 2 components, CF(1) - the catalytic core - and CF(0) - the membrane proton channel. CF(1) has five subunits: alpha(3), beta(3), gamma(1), delta(1), epsilon(1). CF(0) has three main subunits: a, b and c.

It localises to the cell membrane. In terms of biological role, produces ATP from ADP in the presence of a proton gradient across the membrane. The gamma chain is believed to be important in regulating ATPase activity and the flow of protons through the CF(0) complex. The sequence is that of ATP synthase gamma chain from Opitutus terrae (strain DSM 11246 / JCM 15787 / PB90-1).